The chain runs to 164 residues: SsrA-binding protein (164 aa).

The interval 141 to 164 (KLHDKRQDEKQKSIKKEINSALKR) is disordered. A compositionally biased stretch (basic and acidic residues) spans 145–158 (KRQDEKQKSIKKEI).

It belongs to the SmpB family.

The protein resides in the cytoplasm. Required for rescue of stalled ribosomes mediated by trans-translation. Binds to transfer-messenger RNA (tmRNA), required for stable association of tmRNA with ribosomes. tmRNA and SmpB together mimic tRNA shape, replacing the anticodon stem-loop with SmpB. tmRNA is encoded by the ssrA gene; the 2 termini fold to resemble tRNA(Ala) and it encodes a 'tag peptide', a short internal open reading frame. During trans-translation Ala-aminoacylated tmRNA acts like a tRNA, entering the A-site of stalled ribosomes, displacing the stalled mRNA. The ribosome then switches to translate the ORF on the tmRNA; the nascent peptide is terminated with the 'tag peptide' encoded by the tmRNA and targeted for degradation. The ribosome is freed to recommence translation, which seems to be the essential function of trans-translation. This chain is SsrA-binding protein, found in Prochlorococcus marinus (strain AS9601).